Consider the following 933-residue polypeptide: Bifunctional uridylyltransferase/uridylyl-removing enzyme (933 aa).

The uridylyltransferase stretch occupies residues 1-379; sequence MAKISLKLDE…TFQRRKRKLA (379 aa). The interval 380 to 736 is uridylyl-removing; the sequence is GTSDFIVDNH…VKTHQFEAVT (357 aa). The HD domain occupies 496–619; sequence VDEHLIRCIG…VQSVERLKLL (124 aa). 2 consecutive ACT domains span residues 737 to 818 and 848 to 922; these read EITV…EMIE and VIEV…GIAP.

Belongs to the GlnD family. It depends on Mg(2+) as a cofactor.

The catalysed reaction is [protein-PII]-L-tyrosine + UTP = [protein-PII]-uridylyl-L-tyrosine + diphosphate. It catalyses the reaction [protein-PII]-uridylyl-L-tyrosine + H2O = [protein-PII]-L-tyrosine + UMP + H(+). Uridylyltransferase (UTase) activity is inhibited by glutamine, while glutamine activates uridylyl-removing (UR) activity. In terms of biological role, modifies, by uridylylation and deuridylylation, the PII regulatory proteins (GlnB and homologs), in response to the nitrogen status of the cell that GlnD senses through the glutamine level. Under low glutamine levels, catalyzes the conversion of the PII proteins and UTP to PII-UMP and PPi, while under higher glutamine levels, GlnD hydrolyzes PII-UMP to PII and UMP (deuridylylation). Thus, controls uridylylation state and activity of the PII proteins, and plays an important role in the regulation of nitrogen fixation and metabolism. The protein is Bifunctional uridylyltransferase/uridylyl-removing enzyme of Mesorhizobium japonicum (strain LMG 29417 / CECT 9101 / MAFF 303099) (Mesorhizobium loti (strain MAFF 303099)).